A 320-amino-acid polypeptide reads, in one-letter code: Protein MRG1 (320 aa).

The tract at residues 1–28 (MGSSSKEETASDGDTASGGASPSNDGRL) is disordered. A compositionally biased stretch (polar residues) spans 12–24 (DGDTASGGASPSN). Positions 30–80 (SEGERVLAYHGPRVYGAKVQKVELRKKEWKYFVHYLGWNKNWDEWVSADRL) constitute a Tudor-knot domain. Basic and acidic residues predominate over residues 93-104 (ALDKKQGVEKGT). Residues 93–147 (ALDKKQGVEKGTKSGRSAQTKTRSSADTKADKDDTKTNAAKGKKRKHESGNEKDN) form a disordered region. The span at 106–115 (SGRSAQTKTR) shows a compositional bias: polar residues. The segment covering 116-128 (SSADTKADKDDTK) has biased composition (basic and acidic residues). In terms of domain architecture, MRG spans 150 to 318 (AEKLMKIQIP…KVSDGKGKGK (169 aa)).

Interacts with HAM1 and HAM2. Interacts (via MRG domain) with CO. Component of the NuA4 histone acetyltransferase complex. In terms of tissue distribution, ubiquitous. Mainly expressed in the vasculature of cotyledons and leaves, and in roots and inflorescences.

It is found in the nucleus. Functionally, chromatin remodeling factor. Acts as a 'reader' protein by binding to H3K36me3 and H3K36me3 to control histone H4 acetylation. Increases the transcriptional levels of the flowering time genes FLC and FT. Binds the chromatin at the FT promoter upon interaction with CO. This Arabidopsis thaliana (Mouse-ear cress) protein is Protein MRG1.